Here is a 132-residue protein sequence, read N- to C-terminus: Mini-ribonuclease 3 (132 aa).

Residue aspartate 17 is part of the active site.

Belongs to the MrnC RNase family. In terms of assembly, homodimer. Mg(2+) serves as cofactor.

The protein localises to the cytoplasm. In terms of biological role, involved in correct processing of both the 5' and 3' ends of 23S rRNA precursor. Processes 30S rRNA precursor transcript even in absence of ribonuclease 3 (Rnc); Rnc processes 30S rRNA into smaller rRNA precursors. The sequence is that of Mini-ribonuclease 3 from Enterococcus faecalis (strain ATCC 700802 / V583).